A 366-amino-acid chain; its full sequence is Ribosomal RNA small subunit methyltransferase H 1 (366 aa).

The disordered stretch occupies residues 1-46 (MADQNINKNEKVLTGQPTENQEPVHKRRERYKGTHPKTFKEKYKER). Over residues 25–37 (HKRRERYKGTHPK) the composition is skewed to basic residues. S-adenosyl-L-methionine-binding positions include 97 to 99 (GGH), aspartate 117, phenylalanine 147, aspartate 166, and glutamine 173.

It belongs to the methyltransferase superfamily. RsmH family.

It is found in the cytoplasm. The enzyme catalyses cytidine(1402) in 16S rRNA + S-adenosyl-L-methionine = N(4)-methylcytidine(1402) in 16S rRNA + S-adenosyl-L-homocysteine + H(+). Its function is as follows. Specifically methylates the N4 position of cytidine in position 1402 (C1402) of 16S rRNA. The sequence is that of Ribosomal RNA small subunit methyltransferase H 1 from Lachnoclostridium phytofermentans (strain ATCC 700394 / DSM 18823 / ISDg) (Clostridium phytofermentans).